A 98-amino-acid polypeptide reads, in one-letter code: NADH-ubiquinone oxidoreductase chain 4L (98 aa).

3 helical membrane passes run 1-21 (MPSISTNIILAFTTALLGVLI), 26-46 (LMSSLLCLEGMMLSMFILVSL), and 61-81 (IILLVFAACEAAVGLALLVMV).

It belongs to the complex I subunit 4L family. In terms of assembly, core subunit of respiratory chain NADH dehydrogenase (Complex I) which is composed of 45 different subunits.

Its subcellular location is the mitochondrion inner membrane. It carries out the reaction a ubiquinone + NADH + 5 H(+)(in) = a ubiquinol + NAD(+) + 4 H(+)(out). Functionally, core subunit of the mitochondrial membrane respiratory chain NADH dehydrogenase (Complex I) which catalyzes electron transfer from NADH through the respiratory chain, using ubiquinone as an electron acceptor. Part of the enzyme membrane arm which is embedded in the lipid bilayer and involved in proton translocation. The protein is NADH-ubiquinone oxidoreductase chain 4L (MT-ND4L) of Galago senegalensis (Northern lesser bushbaby).